Reading from the N-terminus, the 313-residue chain is WD repeat-containing protein 82 (313 aa).

WD repeat units follow at residues 19–58 (ENSD…PKRT), 105–144 (GHSK…CQGL), 146–184 (HLQG…KGPF), 192–231 (DRTC…VMHT), 236–276 (ANSK…KVAV), and 280–313 (KHTG…TIDD).

Belongs to the WD repeat SWD2 family. Component of the SET1/COMPASS complex, at least composed of the catalytic subunit (SETD1A or SETD1B), WDR5, WDR82, RBBP5, ASH2L/ASH2, CXXC1/CFP1, HCFC1 and DPY30. Component of the PNUTS-PP1 phosphatase complex, composed of PPP1R10/PNUTS, TOX4, WDR82, and PPP1CA or PPP1CB or PPP1CC. Associated with multiple protein complexes including an RNA polymerase II complex, MLL3/MLL4 complex and a chaperonin-containing TCP1 complex. Interacts with SETD1B (via N-terminal region); the interaction is direct. Interacts with SETD1A (via N-terminal region); the interaction is direct. Interacts with CUL4B. Interacts with RBBP5. Interacts with POLR2B. Interacts with hyperphosphorylated C-terminal domain (CTD) of RNA polymerase II large subunit (POLR2A). Binds specifically to CTD heptad repeats phosphorylated on 'Ser-5' of each heptad. SETD1A enhances its interaction with POLR2A. Interacts with PPP1R10/PNUTS. Interacts with PPP1CA in the presence of PPP1R10/PNUTS. Interacts with ZC3H4; interaction is independent of the SET1 complex and promotes transcription termination of long non-coding RNAs (lncRNAs).

Its subcellular location is the nucleus. It is found in the chromosome. The protein localises to the cytoplasm. Regulatory component of the SET1/COMPASS complex implicated in the tethering of this complex to transcriptional start sites of active genes. Facilitates histone H3 'Lys-4' methylation (H3K4me) via recruitment of the SETD1A or SETD1B to the 'Ser-5' phosphorylated C-terminal domain (CTD) of RNA polymerase II large subunit (POLR2A). Component of the PNUTS-PP1 protein phosphatase complex, a protein phosphatase 1 (PP1) complex that promotes RNA polymerase II transcription pause-release, allowing transcription elongation. PNUTS-PP1 also plays a role in the control of chromatin structure and cell cycle progression during the transition from mitosis into interphase. Together with ZC3H4, but independently of the SET1 complex, part of a transcription termination checkpoint that promotes transcription termination of long non-coding RNAs (lncRNAs). The transcription termination checkpoint is activated by the inefficiently spliced first exon of lncRNAs and promotes transcription termination of lncRNAs and their subsequent degradation by the exosome. The polypeptide is WD repeat-containing protein 82 (Homo sapiens (Human)).